Reading from the N-terminus, the 427-residue chain is Enolase (427 aa).

Glutamine 163 lines the (2R)-2-phosphoglycerate pocket. The active-site Proton donor is glutamate 205. Aspartate 242, glutamate 285, and aspartate 312 together coordinate Mg(2+). The (2R)-2-phosphoglycerate site is built by lysine 337, arginine 366, serine 367, and lysine 388. Catalysis depends on lysine 337, which acts as the Proton acceptor.

The protein belongs to the enolase family. The cofactor is Mg(2+).

It localises to the cytoplasm. The protein resides in the secreted. The protein localises to the cell surface. The catalysed reaction is (2R)-2-phosphoglycerate = phosphoenolpyruvate + H2O. It participates in carbohydrate degradation; glycolysis; pyruvate from D-glyceraldehyde 3-phosphate: step 4/5. In terms of biological role, catalyzes the reversible conversion of 2-phosphoglycerate (2-PG) into phosphoenolpyruvate (PEP). It is essential for the degradation of carbohydrates via glycolysis. This chain is Enolase, found in Variovorax paradoxus (strain S110).